Here is an 89-residue protein sequence, read N- to C-terminus: Large ribosomal subunit protein bL27 (89 aa).

The segment at 1–21 (MAHKKAGGSSRNGRDSAGRRL) is disordered.

This sequence belongs to the bacterial ribosomal protein bL27 family.

The polypeptide is Large ribosomal subunit protein bL27 (Novosphingobium aromaticivorans (strain ATCC 700278 / DSM 12444 / CCUG 56034 / CIP 105152 / NBRC 16084 / F199)).